A 773-amino-acid polypeptide reads, in one-letter code: Linolenate 9R-lipoxygenase (773 aa).

The Lipoxygenase domain maps to 176-773 (YEWVDSKKKS…LEDLMMSINI (598 aa)). Fe cation contacts are provided by H515, H520, and I773.

It belongs to the lipoxygenase family.

It catalyses the reaction (9Z,12Z,15Z)-octadecatrienoate + O2 = (9R,10E,12Z,15Z)-9-hydroperoxyoctadeca-10,12,15-trienoate. Its pathway is lipid metabolism; oxylipin biosynthesis. Catalyzes the conversion of alpha-linoleate to (9R,10E,12Z,15Z)-9-hydroperoxyoctadeca-10,12,15-trienoate in oxylipin biosynthesis. Also converts alpha-linoleate to (9R,10E,12Z)-9-hydroperoxyoctadeca-10,12-dienoate. In Nostoc sp. (strain PCC 7120 / SAG 25.82 / UTEX 2576), this protein is Linolenate 9R-lipoxygenase.